The chain runs to 282 residues: Bifunctional protein FolD (282 aa).

NADP(+) is bound by residues 166 to 168 (GAS) and Ile232.

The protein belongs to the tetrahydrofolate dehydrogenase/cyclohydrolase family. As to quaternary structure, homodimer.

The enzyme catalyses (6R)-5,10-methylene-5,6,7,8-tetrahydrofolate + NADP(+) = (6R)-5,10-methenyltetrahydrofolate + NADPH. It catalyses the reaction (6R)-5,10-methenyltetrahydrofolate + H2O = (6R)-10-formyltetrahydrofolate + H(+). It functions in the pathway one-carbon metabolism; tetrahydrofolate interconversion. Catalyzes the oxidation of 5,10-methylenetetrahydrofolate to 5,10-methenyltetrahydrofolate and then the hydrolysis of 5,10-methenyltetrahydrofolate to 10-formyltetrahydrofolate. The polypeptide is Bifunctional protein FolD (Histophilus somni (strain 129Pt) (Haemophilus somnus)).